The sequence spans 193 residues: Phosphoheptose isomerase (193 aa).

The region spanning 37 to 193 is the SIS domain; it reads LADSFKAGGK…MLIEKEMAKG (157 aa). 52 to 54 provides a ligand contact to substrate; the sequence is NGG. Zn(2+) is bound by residues histidine 61 and glutamate 65. Residues glutamate 65, 93 to 94, 119 to 121, serine 124, and glutamine 172 contribute to the substrate site; these read ND and STS. The Zn(2+) site is built by glutamine 172 and histidine 180.

Belongs to the SIS family. GmhA subfamily. As to quaternary structure, homotetramer. Requires Zn(2+) as cofactor.

It localises to the cytoplasm. The catalysed reaction is 2 D-sedoheptulose 7-phosphate = D-glycero-alpha-D-manno-heptose 7-phosphate + D-glycero-beta-D-manno-heptose 7-phosphate. The protein operates within carbohydrate biosynthesis; D-glycero-D-manno-heptose 7-phosphate biosynthesis; D-glycero-alpha-D-manno-heptose 7-phosphate and D-glycero-beta-D-manno-heptose 7-phosphate from sedoheptulose 7-phosphate: step 1/1. Catalyzes the isomerization of sedoheptulose 7-phosphate in D-glycero-D-manno-heptose 7-phosphate. The sequence is that of Phosphoheptose isomerase from Klebsiella pneumoniae subsp. pneumoniae (strain ATCC 700721 / MGH 78578).